Here is a 202-residue protein sequence, read N- to C-terminus: MNESLVELSAYLKNKLGDKLEETILAFGELTIVSRLDAITGVLMFVRDDSRCQFINLTDISGVDYPSRDKRFDVSYQLLAPRHNLRLRIKVRTDENTPVASACSIYPGAEWYEREAYDMYGILFSGHPDLRRILTDYGFEGHPLRKDFPVTGFVECRYDNEAKRVIYEPVVLRQEMRNFDFLSPWEGAQYVLPCNEKAEGEK.

This sequence belongs to the complex I 30 kDa subunit family. As to quaternary structure, NDH-1 is composed of 14 different subunits. Subunits NuoB, C, D, E, F, and G constitute the peripheral sector of the complex.

It localises to the cell inner membrane. The enzyme catalyses a quinone + NADH + 5 H(+)(in) = a quinol + NAD(+) + 4 H(+)(out). Its function is as follows. NDH-1 shuttles electrons from NADH, via FMN and iron-sulfur (Fe-S) centers, to quinones in the respiratory chain. The immediate electron acceptor for the enzyme in this species is believed to be ubiquinone. Couples the redox reaction to proton translocation (for every two electrons transferred, four hydrogen ions are translocated across the cytoplasmic membrane), and thus conserves the redox energy in a proton gradient. The sequence is that of NADH-quinone oxidoreductase subunit C from Bartonella quintana (strain Toulouse) (Rochalimaea quintana).